Consider the following 83-residue polypeptide: Cytochrome c oxidase subunit 7A2, mitochondrial (83 aa).

A mitochondrion-targeting transit peptide spans 1–23 (MLRNLLALRQIAKRTISTSSRRQ). At 24–48 (FENKVPEKQKLFQEDNGIPVHLKGG) the chain is on the mitochondrial matrix side. Residue K33 is modified to N6-acetyllysine. Residues 49–77 (IADALLYRATLILTVGGTAYAMYELAVAS) form a helical membrane-spanning segment. Residues 78–83 (FPKKQD) lie on the Mitochondrial intermembrane side of the membrane.

It belongs to the cytochrome c oxidase VIIa family. In terms of assembly, component of the cytochrome c oxidase (complex IV, CIV), a multisubunit enzyme composed of 14 subunits. The complex is composed of a catalytic core of 3 subunits MT-CO1, MT-CO2 and MT-CO3, encoded in the mitochondrial DNA, and 11 supernumerary subunits COX4I1 (or COX4I2), COX5A, COX5B, COX6A2 (or COX6A1), COX6B1 (or COX6B2), COX6C, COX7A1 (or COX7A2), COX7B, COX7C, COX8B and NDUFA4, which are encoded in the nuclear genome. The complex exists as a monomer or a dimer and forms supercomplexes (SCs) in the inner mitochondrial membrane with NADH-ubiquinone oxidoreductase (complex I, CI) and ubiquinol-cytochrome c oxidoreductase (cytochrome b-c1 complex, complex III, CIII), resulting in different assemblies (supercomplex SCI(1)III(2)IV(1) and megacomplex MCI(2)III(2)IV(2)). Interacts with PET100.

The protein resides in the mitochondrion inner membrane. Its pathway is energy metabolism; oxidative phosphorylation. Its function is as follows. Component of the cytochrome c oxidase, the last enzyme in the mitochondrial electron transport chain which drives oxidative phosphorylation. The respiratory chain contains 3 multisubunit complexes succinate dehydrogenase (complex II, CII), ubiquinol-cytochrome c oxidoreductase (cytochrome b-c1 complex, complex III, CIII) and cytochrome c oxidase (complex IV, CIV), that cooperate to transfer electrons derived from NADH and succinate to molecular oxygen, creating an electrochemical gradient over the inner membrane that drives transmembrane transport and the ATP synthase. Cytochrome c oxidase is the component of the respiratory chain that catalyzes the reduction of oxygen to water. Electrons originating from reduced cytochrome c in the intermembrane space (IMS) are transferred via the dinuclear copper A center (CU(A)) of subunit 2 and heme A of subunit 1 to the active site in subunit 1, a binuclear center (BNC) formed by heme A3 and copper B (CU(B)). The BNC reduces molecular oxygen to 2 water molecules using 4 electrons from cytochrome c in the IMS and 4 protons from the mitochondrial matrix. The protein is Cytochrome c oxidase subunit 7A2, mitochondrial (COX7A2) of Bos taurus (Bovine).